A 577-amino-acid chain; its full sequence is Arginine--tRNA ligase (577 aa).

A 'HIGH' region motif is present at residues 122–132; that stretch reads PNVAKEMHVGH.

Belongs to the class-I aminoacyl-tRNA synthetase family. As to quaternary structure, monomer.

It is found in the cytoplasm. The catalysed reaction is tRNA(Arg) + L-arginine + ATP = L-arginyl-tRNA(Arg) + AMP + diphosphate. The chain is Arginine--tRNA ligase from Escherichia coli O157:H7 (strain EC4115 / EHEC).